A 2006-amino-acid polypeptide reads, in one-letter code: Sodium channel protein type 2 subunit alpha (2006 aa).

Phosphoserine is present on Ser4. A disordered region spans residues 28-61; it reads RIAEEKAKRPKQERKDEDDENGPKPNSDLEAGKS. A Glycyl lysine isopeptide (Lys-Gly) (interchain with G-Cter in SUMO1) cross-link involves residue Lys38. Residues 111 to 456 form an I repeat; that stretch reads ILTPFNPIRK…QQMLEQLKKQ (346 aa). The chain crosses the membrane as a helical span at residues 130 to 148; sequence LFNVLIMCTILTNCVFMTM. Residues 156–176 traverse the membrane as a helical segment; it reads KNVEYTFTGIYTFESLIKILA. The helical transmembrane segment at 191 to 208 threads the bilayer; sequence WNWLDFTVITFAYVTEFV. A helical membrane pass occupies residues 215–231; sequence ALRTFRVLRALKTISVI. A helical transmembrane segment spans residues 251–270; it reads VMILTVFCLSVFALIGLQLF. A disulfide bond links Cys278 and Cys338. Asn285, Asn291, Asn297, Asn303, Asn308, and Asn340 each carry an N-linked (GlcNAc...) asparagine glycan. An intramembrane region (pore-forming) is located at residues 370–394; that stretch reads FSWAFLSLFRLMTQDFWENLYQLTL. The helical transmembrane segment at 402-422 threads the bilayer; that stretch reads MIFFVLVIFLGSFYLINLILA. Ser468, Ser471, Ser484, Ser526, Ser528, Ser531, Ser553, Ser554, Ser558, Ser573, Ser576, Ser589, Ser610, Ser623, Ser687, Ser688, and Ser722 each carry phosphoserine. Positions 494 to 529 are disordered; it reads SSKSEKELKNRRKKKKQKEQAGEEEKEDAVRKSASE. Residues 511–529 are compositionally biased toward basic and acidic residues; sequence KEQAGEEEKEDAVRKSASE. Positions 589–635 are disordered; that stretch reads SENDFADDEHSTFEDNDSRRDSLFVPHRHGERRPSNVSQASRASRGI. The segment covering 596–610 has biased composition (basic and acidic residues); that stretch reads DEHSTFEDNDSRRDS. An II repeat occupies 742–1014; that stretch reads CCKPWLKVKH…QIAVGRMQKG (273 aa). The helical transmembrane segment at 761–779 threads the bilayer; the sequence is FVDLAITICIVLNTLFMAM. A helical transmembrane segment spans residues 791 to 810; sequence VLSVGNLVFTGIFTAEMFLK. A helical transmembrane segment spans residues 825 to 844; that stretch reads NIFDGFIVSLSLMELGLANV. The helical transmembrane segment at 847–864 threads the bilayer; that stretch reads LSVLRSFRLLRVFKLAKS. The chain crosses the membrane as a helical span at residues 881–899; that stretch reads ALGNLTLVLAIIVFIFAVV. The cysteines at positions 913 and 919 are disulfide-linked. The segment at 918 to 919 is binds SCN2B; that stretch reads DC. Residues 929-949 constitute an intramembrane region (pore-forming); the sequence is FFHSFLIVFRVLCGEWIETMW. An intrachain disulfide couples Cys951 to Cys960. The helical transmembrane segment at 963–983 threads the bilayer; that stretch reads VFMMVMVIGNLVVLNLFLALL. Positions 1121–1167 are disordered; the sequence is EEFSSESDMEESKEKLNATSSSEGSTVDIGAPAEGEQPEAEPEESLE. Over residues 1156–1167 the composition is skewed to acidic residues; the sequence is EQPEAEPEESLE. The stretch at 1191–1505 is one III repeat; sequence KGKLWWNLRK…KKYYNAMKKL (315 aa). A helical transmembrane segment spans residues 1211 to 1228; the sequence is FETFIVFMILLSSGALAF. The chain crosses the membrane as a helical span at residues 1242-1260; sequence MLEYADKVFTYIFILEMLL. Residues 1275–1293 form a helical membrane-spanning segment; it reads WCWLDFLIVDVSLVSLTAN. Residues 1302–1320 form a helical membrane-spanning segment; it reads AIKSLRTLRALRPLRALSR. A helical transmembrane segment spans residues 1338–1357; that stretch reads IMNVLLVCLIFWLIFSIMGV. A disulfide bridge connects residues Cys1367 and Cys1387. The segment at residues 1410-1431 is an intramembrane region (pore-forming); it reads GLGYLSLLQVATFKGWMDIMYA. A helical transmembrane segment spans residues 1449–1470; that stretch reads YMYLYFVIFIIFGSFFTLNLFI. Position 1507 is a phosphoserine (Ser1507). The IV repeat unit spans residues 1514 to 1812; it reads IPRPANKFQG…WEKFDPDATQ (299 aa). Residues 1534-1551 form a helical membrane-spanning segment; it reads FDISIMILICLNMVTMMV. The helical transmembrane segment at 1563 to 1581 threads the bilayer; it reads ILYWINLVFIVLFTGECVL. The chain crosses the membrane as a helical span at residues 1594 to 1611; the sequence is GWNIFDFVVVILSIVGMF. The chain crosses the membrane as a helical span at residues 1625-1641; sequence LFRVIRLARIGRILRLI. Residues 1661–1678 traverse the membrane as a helical segment; it reads LFNIGLLLFLVMFIYAIF. Positions 1701–1723 form an intramembrane region, pore-forming; sequence FGNSMICLFQITTSAGWDGLLAP. The cysteines at positions 1732 and 1747 are disulfide-linked. The helical transmembrane segment at 1754 to 1776 threads the bilayer; sequence IFFFVSYIIISFLVVVNMYIAVI. Residues 1906–1935 form the IQ domain; sequence EEVSAIVIQRAYRRYLLKQKVKKVSSIYKK. Phosphoserine is present on Ser1931. Residues 1934–1965 are compositionally biased toward basic and acidic residues; sequence KKDKGKEDEGTPIKEDIITDKLNENSTPEKTD. The disordered stretch occupies residues 1934–2006; the sequence is KKDKGKEDEG…KGKDIRESKK (73 aa). Phosphothreonine is present on residues Thr1944, Thr1964, and Thr1967. At Ser1972 the chain carries Phosphoserine. A compositionally biased stretch (basic and acidic residues) spans 1980–2006; it reads TKPEKEKFEKDKSEKEDKGKDIRESKK.

Belongs to the sodium channel (TC 1.A.1.10) family. Nav1.2/SCN2A subfamily. As to quaternary structure, heterooligomer of a large alpha subunit and a smaller beta subunit. Heterooligomer with SCN2B or SCN4B; disulfide-linked. Interacts with NEDD4L. Interacts with CALM. Interacts with TMEM233. In terms of processing, sumoylated at Lys-38. Sumoylation is induced by hypoxia, increases voltage-gated sodium current and mediates the early response to acute hypoxia in neurons. Sumoylated SCN2A is located at the cell membrane. Expressed in brain (at protein level). Detected in hippocampus, cortex and brain stem.

The protein resides in the cell membrane. The enzyme catalyses Na(+)(in) = Na(+)(out). Functionally, mediates the voltage-dependent sodium ion permeability of excitable membranes. Assuming opened or closed conformations in response to the voltage difference across the membrane, the protein forms a sodium-selective channel through which Na(+) ions may pass in accordance with their electrochemical gradient. Implicated in the regulation of hippocampal replay occurring within sharp wave ripples (SPW-R) important for memory. The polypeptide is Sodium channel protein type 2 subunit alpha (Mus musculus (Mouse)).